Here is a 270-residue protein sequence, read N- to C-terminus: Release factor glutamine methyltransferase (270 aa).

S-adenosyl-L-methionine-binding positions include 112 to 116 (GTGSG), Asp135, Trp162, and Asn178. 178 to 181 (NPPY) contacts substrate.

It belongs to the protein N5-glutamine methyltransferase family. PrmC subfamily.

It catalyses the reaction L-glutaminyl-[peptide chain release factor] + S-adenosyl-L-methionine = N(5)-methyl-L-glutaminyl-[peptide chain release factor] + S-adenosyl-L-homocysteine + H(+). Functionally, methylates the class 1 translation termination release factors RF1/PrfA and RF2/PrfB on the glutamine residue of the universally conserved GGQ motif. The protein is Release factor glutamine methyltransferase of Bordetella pertussis (strain Tohama I / ATCC BAA-589 / NCTC 13251).